A 470-amino-acid polypeptide reads, in one-letter code: Cyclic AMP-responsive element-binding protein 3-like protein 3 (470 aa).

Residues Met1–Cys319 lie on the Cytoplasmic side of the membrane. The interval Ser59–Glu145 is disordered. The region spanning Val239 to Leu302 is the bZIP domain. A basic motif region spans residues Lys241 to Arg270. The interval Leu281–Leu302 is leucine-zipper. Lys290 is covalently cross-linked (Glycyl lysine isopeptide (Lys-Gly) (interchain with G-Cter in ubiquitin)). Residues Ile320 to Ala340 form a helical; Signal-anchor for type II membrane protein membrane-spanning segment. At Asn341–Leu470 the chain is on the lumenal side. Residues Asn410 and Asn417 are each glycosylated (N-linked (GlcNAc...) asparagine).

The protein belongs to the bZIP family. ATF subfamily. In terms of assembly, binds DNA as a dimer. May form homodimers. Interacts with ATF6. Interacts with SYNV1/HRD1; this interaction leads to CREB3L3 ubiquitination and proteasomal degradation. Controlled by regulated intramembrane proteolysis (RIP). Following ER stress a fragment containing the cytoplasmic transcription factor domain is released by proteolysis. The cleavage seems to be performed sequentially by site-1 and site-2 proteases (PS1 and PS2). Post-translationally, N-glycosylation is required for optimal proteolytic activation. In terms of processing, ubiquitinated at Lys-290 by SYNV1/HRD1 via 'Lys-27'-linked ubiquitin.

Its subcellular location is the endoplasmic reticulum membrane. It is found in the nucleus. Functionally, transcription factor that may act during endoplasmic reticulum stress by activating unfolded protein response target genes. Activated in response to cAMP stimulation. Binds the cAMP response element (CRE). Activates transcription through box-B element and CRE. Seems to function synergistically with ATF6. In acute inflammatory response, may activate expression of acute phase response (APR) genes. May be involved in growth suppression. Regulates FGF21 transcription. Plays a crucial role in the regulation of triglyceride metabolism and is required for the maintenance of normal plasma triglyceride concentrations. The chain is Cyclic AMP-responsive element-binding protein 3-like protein 3 (Creb3l3) from Rattus norvegicus (Rat).